Here is a 112-residue protein sequence, read N- to C-terminus: Integration host factor subunit alpha (112 aa).

The protein belongs to the bacterial histone-like protein family. As to quaternary structure, heterodimer of an alpha and a beta chain.

This protein is one of the two subunits of integration host factor, a specific DNA-binding protein that functions in genetic recombination as well as in transcriptional and translational control. This chain is Integration host factor subunit alpha, found in Rhizobium johnstonii (strain DSM 114642 / LMG 32736 / 3841) (Rhizobium leguminosarum bv. viciae).